Consider the following 896-residue polypeptide: Myelin regulatory factor-like protein (896 aa).

Residues 111–403 (GLPHRTFHNC…SNPGQFENDI (293 aa)) constitute a DNA-binding region (NDT80). Positions 449-557 (SDSRAKQNVQ…KLTNNLEERI (109 aa)) constitute a Peptidase S74 domain. The stretch at 541–573 (GAVKQLCKLTNNLEERIEELEIWNRKLARLKRL) forms a coiled coil. A helical membrane pass occupies residues 622–638 (VFQSLVITLIAVMAFCL). A compositionally biased stretch (polar residues) spans 648–658 (APSSNLTSSQE). A disordered region spans residues 648–672 (APSSNLTSSQEPALPSTASPSAPNT). Over residues 659 to 672 (PALPSTASPSAPNT) the composition is skewed to low complexity.

This sequence belongs to the MRF family.

It localises to the membrane. This is Myelin regulatory factor-like protein (MYRFL) from Bos taurus (Bovine).